A 256-amino-acid polypeptide reads, in one-letter code: Ribosomal RNA small subunit methyltransferase J (256 aa).

Residues 104–105 (RD), 120–121 (ER), 156–157 (SS), and Asp174 each bind S-adenosyl-L-methionine.

It belongs to the methyltransferase superfamily. RsmJ family.

It localises to the cytoplasm. It catalyses the reaction guanosine(1516) in 16S rRNA + S-adenosyl-L-methionine = N(2)-methylguanosine(1516) in 16S rRNA + S-adenosyl-L-homocysteine + H(+). Its function is as follows. Specifically methylates the guanosine in position 1516 of 16S rRNA. The sequence is that of Ribosomal RNA small subunit methyltransferase J from Yersinia pseudotuberculosis serotype O:3 (strain YPIII).